The chain runs to 599 residues: Elongation factor 4 (599 aa).

Residues 2–184 form the tr-type G domain; that stretch reads KNIRNFSIIA…RLVRDIPPPQ (183 aa). Residues 14–19 and 131–134 contribute to the GTP site; these read DHGKST and NKID.

Belongs to the TRAFAC class translation factor GTPase superfamily. Classic translation factor GTPase family. LepA subfamily.

It localises to the cell inner membrane. It carries out the reaction GTP + H2O = GDP + phosphate + H(+). Functionally, required for accurate and efficient protein synthesis under certain stress conditions. May act as a fidelity factor of the translation reaction, by catalyzing a one-codon backward translocation of tRNAs on improperly translocated ribosomes. Back-translocation proceeds from a post-translocation (POST) complex to a pre-translocation (PRE) complex, thus giving elongation factor G a second chance to translocate the tRNAs correctly. Binds to ribosomes in a GTP-dependent manner. This chain is Elongation factor 4, found in Salmonella arizonae (strain ATCC BAA-731 / CDC346-86 / RSK2980).